The chain runs to 373 residues: ATP phosphoribosyltransferase regulatory subunit (373 aa).

It belongs to the class-II aminoacyl-tRNA synthetase family. HisZ subfamily. As to quaternary structure, heteromultimer composed of HisG and HisZ subunits.

It localises to the cytoplasm. The protein operates within amino-acid biosynthesis; L-histidine biosynthesis; L-histidine from 5-phospho-alpha-D-ribose 1-diphosphate: step 1/9. Required for the first step of histidine biosynthesis. May allow the feedback regulation of ATP phosphoribosyltransferase activity by histidine. In Rhizobium johnstonii (strain DSM 114642 / LMG 32736 / 3841) (Rhizobium leguminosarum bv. viciae), this protein is ATP phosphoribosyltransferase regulatory subunit.